Consider the following 106-residue polypeptide: Class II hydrophobin 6 (106 aa).

An N-terminal signal peptide occupies residues 1–16 (MQFFTVATLFLATAFA). 4 disulfides stabilise this stretch: cysteine 36/cysteine 86, cysteine 47/cysteine 77, cysteine 48/cysteine 60, and cysteine 87/cysteine 98.

It belongs to the cerato-ulmin hydrophobin family. As to quaternary structure, homodimer. Homodimers further self-assemble to form highly ordered films at water-air interfaces through intermolecular interactions.

The protein localises to the secreted. It localises to the cell wall. Functionally, aerial growth, conidiation, and dispersal of filamentous fungi in the environment rely upon a capability of their secreting small amphipathic proteins called hydrophobins (HPBs) with low sequence identity. Class I can self-assemble into an outermost layer of rodlet bundles on aerial cell surfaces, conferring cellular hydrophobicity that supports fungal growth, development and dispersal; whereas Class II form highly ordered films at water-air interfaces through intermolecular interactions but contribute nothing to the rodlet structure. HFB2-6 is a class II hydrophobin that has a function in root colonization. Acts as an effector in poplar by up-regulating the expression of genes related to both the jasmonic acid and salicylic acid signal transduction pathways, which not only causes induced systemic resistance (ISR), but also systemic acquired resistance (SAR), giving poplar broad-spectrum resistance to pathogens. Also induces genes related to auxin signal transduction to promote poplar growth. Plays roles in interactions with both biotic and abiotic environmental conditions such as the presence of the pathogen Alternaria alternata or nutrient starvation conditions. The sequence is that of Class II hydrophobin 6 from Trichoderma asperellum (strain ATCC 204424 / CBS 433.97 / NBRC 101777).